The chain runs to 562 residues: Arginine--tRNA ligase (562 aa).

Residues 122 to 132 (PNIAKDMHVGH) carry the 'HIGH' region motif.

Belongs to the class-I aminoacyl-tRNA synthetase family. In terms of assembly, monomer.

It localises to the cytoplasm. The catalysed reaction is tRNA(Arg) + L-arginine + ATP = L-arginyl-tRNA(Arg) + AMP + diphosphate. The polypeptide is Arginine--tRNA ligase (Chlamydia felis (strain Fe/C-56) (Chlamydophila felis)).